The primary structure comprises 349 residues: MENIAKILRLAEEKILLVQNLKDLQEYKVEFLGKNGIVTGELKKLGSLNEQARKEFGLKINKLKDKIQNTIKVKEEILEEQELNLKLAADKIDLTIPARKYKQGSIHPITQCSEELIQVFSKFGFTINNGPNIEDTFHNFTALNFEDDHPARQMHDTFYLKGQEDSKPMLLRTHTSTVQIRAMKNGNPPFRFIALGRTYRSDSDMTHTPMFHQIEGLVIDKNINMGHLKYVITEFIRSFFENSHIELRFRPSFFPFTEPSAEVDIRMNKNDQWLEVLGCGMVHPNVLKNVGIDSSEYQGFAFGLGVERFAMLKYNIKDLRQFFEGDMRWLKHYNFGGFDIPNLAGGLTK.

Position 258 (glutamate 258) interacts with Mg(2+).

Belongs to the class-II aminoacyl-tRNA synthetase family. Phe-tRNA synthetase alpha subunit type 1 subfamily. In terms of assembly, tetramer of two alpha and two beta subunits. The cofactor is Mg(2+).

The protein resides in the cytoplasm. The enzyme catalyses tRNA(Phe) + L-phenylalanine + ATP = L-phenylalanyl-tRNA(Phe) + AMP + diphosphate + H(+). This Rickettsia canadensis (strain McKiel) protein is Phenylalanine--tRNA ligase alpha subunit.